The sequence spans 431 residues: tRNA(Ile)-lysidine synthase (431 aa).

Serine 26–serine 31 contacts ATP.

This sequence belongs to the tRNA(Ile)-lysidine synthase family.

It localises to the cytoplasm. The catalysed reaction is cytidine(34) in tRNA(Ile2) + L-lysine + ATP = lysidine(34) in tRNA(Ile2) + AMP + diphosphate + H(+). Ligates lysine onto the cytidine present at position 34 of the AUA codon-specific tRNA(Ile) that contains the anticodon CAU, in an ATP-dependent manner. Cytidine is converted to lysidine, thus changing the amino acid specificity of the tRNA from methionine to isoleucine. The polypeptide is tRNA(Ile)-lysidine synthase (Wolbachia pipientis wMel).